The primary structure comprises 505 residues: Trans-cinnamate 4-monooxygenase (505 aa).

Residues 3–23 (LLLVEKTLLALFAAIIASIFI) form a helical membrane-spanning segment. (E)-cinnamate contacts are provided by residues 213–218 (RSRLAQ) and alanine 306. Cysteine 447 lines the heme pocket.

The protein belongs to the cytochrome P450 family. The cofactor is heme.

Its subcellular location is the membrane. It carries out the reaction (E)-cinnamate + reduced [NADPH--hemoprotein reductase] + O2 = (E)-4-coumarate + oxidized [NADPH--hemoprotein reductase] + H2O + H(+). Its pathway is phenylpropanoid metabolism; trans-4-coumarate biosynthesis; trans-4-coumarate from trans-cinnamate: step 1/1. Catalyzes the first oxidative step of the phenylpropanoid pathway in higher plants by transforming trans-cinnamate into p-coumarate. The compounds formed by this pathway are essential components for lignification, pollination, and defense against ultraviolet light, predators and pathogens. The chain is Trans-cinnamate 4-monooxygenase (CYP73A12) from Zinnia elegans (Garden zinnia).